Consider the following 256-residue polypeptide: Vesicle-associated protein 1-1 (256 aa).

Residue Met1 is modified to N-acetylmethionine. Over 1–232 (MSNIDLIGMS…RRESKKSQSG (232 aa)) the chain is Cytoplasmic. An N-acetylserine; in Vesicle-associated protein 1-1, N-terminally processed modification is found at Ser2. In terms of domain architecture, MSP spans 22–142 (LLTVEPLDLQ…EETKLRVTYV (121 aa)). The interval 142-169 (VAPPRPPSPVHEGSEEGSSPRASVSDNG) is disordered. Position 149 is a phosphoserine (Ser149). Residues 157–169 (EGSSPRASVSDNG) show a composition bias toward polar residues. A coiled-coil region spans residues 187-232 (HQENTSEARALITKLTEEKQSAIQLNNRLQRELDQLRRESKKSQSG). The chain crosses the membrane as a helical; Anchor for type IV membrane protein span at residues 233–253 (GIPFMYVLLVGLIGLILGYIM).

Belongs to the VAMP-associated protein (VAP) (TC 9.B.17) family. As to quaternary structure, homodimer or homooligomer. Interacts with the cowpea mosaic virus (CPMV) NTP-binding protein (NTB). Interacts with NET3C.

The protein localises to the endoplasmic reticulum membrane. The protein resides in the protein storage vacuole membrane. Part of a membrane-cytoskeletal adapter complex that forms a bridge between the endoplasmic reticulum and the plasma membrane. Associates with microtubules. This is Vesicle-associated protein 1-1 (PVA11) from Arabidopsis thaliana (Mouse-ear cress).